The sequence spans 186 residues: Putative manganese efflux pump MntP (186 aa).

6 helical membrane-spanning segments follow: residues 1–21, 41–61, 62–82, 105–127, 139–159, and 163–183; these read MSFLTNFLLGLGLAMDAFAVS, VFFGGFQALMPVLGWVGGSAV, SGFVSDYAPWIAFGLLAFIGG, LFLLAVATSIDALAVGISFAFLG, CVTFVMSFCGAVLGYRIGHFF, and VEILGGLILIGLGVKILAEHM.

The protein belongs to the MntP (TC 9.B.29) family.

Its subcellular location is the cell membrane. Functionally, probably functions as a manganese efflux pump. The protein is Putative manganese efflux pump MntP of Methanosarcina mazei (strain ATCC BAA-159 / DSM 3647 / Goe1 / Go1 / JCM 11833 / OCM 88) (Methanosarcina frisia).